We begin with the raw amino-acid sequence, 107 residues long: Large ribosomal subunit protein bL21 (107 aa).

Belongs to the bacterial ribosomal protein bL21 family. Part of the 50S ribosomal subunit. Contacts protein L20.

Functionally, this protein binds to 23S rRNA in the presence of protein L20. The protein is Large ribosomal subunit protein bL21 of Chlamydia trachomatis serovar L2 (strain ATCC VR-902B / DSM 19102 / 434/Bu).